The sequence spans 88 residues: Small integral membrane protein 13 (88 aa).

A helical membrane pass occupies residues 10–30; it reads LVFVATLLIVLLLMVCGWYFV. The segment covering 48–61 has biased composition (polar residues); that stretch reads TGSQEGDNEQPSGS. The tract at residues 48–88 is disordered; sequence TGSQEGDNEQPSGSETEEDPSASPQKIRSARQRRPPVDAGH. Ser59 and Ser61 each carry phosphoserine. Position 63 is a phosphothreonine (Thr63). Phosphoserine is present on Ser70.

The protein belongs to the SMIM13 family.

The protein resides in the membrane. This Mus musculus (Mouse) protein is Small integral membrane protein 13 (Smim13).